The chain runs to 28 residues: Basic phospholipase A2 homolog BmatTX-II (28 aa).

As to quaternary structure, monomer. Expressed by the venom gland.

It localises to the secreted. Functionally, snake venom phospholipase A2 homolog that lacks enzymatic activity. Shows high myotoxic activity, neutrophil activation (demonstrated by activation induction of IL-1beta production), and slight cytotoxicity against Jurkat (leukemia T) and SK-BR-3 (breast adenocarcinoma) tumor cell lines. A model of myotoxic mechanism has been proposed: an apo Lys49-PLA2 is activated by the entrance of a hydrophobic molecule (e.g. fatty acid) at the hydrophobic channel of the protein leading to a reorientation of a monomer. This reorientation causes a transition between 'inactive' to 'active' states, causing alignment of C-terminal and membrane-docking sites (MDoS) side-by-side and putting the membrane-disruption sites (MDiS) in the same plane, exposed to solvent and in a symmetric position for both monomers. The MDoS region stabilizes the toxin on membrane by the interaction of charged residues with phospholipid head groups. Subsequently, the MDiS region destabilizes the membrane with penetration of hydrophobic residues. This insertion causes a disorganization of the membrane, allowing an uncontrolled influx of ions (i.e. calcium and sodium), and eventually triggering irreversible intracellular alterations and cell death. The chain is Basic phospholipase A2 homolog BmatTX-II from Bothrops mattogrossensis (Pitviper).